The sequence spans 594 residues: Probable translation initiation factor IF-2 (594 aa).

In terms of domain architecture, tr-type G spans 11-226; sequence LRTPIVCVMG…LIGLAQRFLE (216 aa). The interval 20–27 is G1; it reads GHVDHGKT. 20 to 27 contributes to the GTP binding site; that stretch reads GHVDHGKT. The G2 stretch occupies residues 45–49; that stretch reads AITQH. Residues 81 to 84 are G3; the sequence is DTPG. Residues 81–85 and 135–138 each bind GTP; these read DTPGH and NKID. Residues 135–138 form a G4 region; it reads NKID. The tract at residues 203–205 is G5; it reads SAR.

The protein belongs to the TRAFAC class translation factor GTPase superfamily. Classic translation factor GTPase family. IF-2 subfamily.

In terms of biological role, function in general translation initiation by promoting the binding of the formylmethionine-tRNA to ribosomes. Seems to function along with eIF-2. This Methanocella arvoryzae (strain DSM 22066 / NBRC 105507 / MRE50) protein is Probable translation initiation factor IF-2.